A 611-amino-acid polypeptide reads, in one-letter code: Conglutin beta 1 (611 aa).

The N-terminal stretch at 1–30 (MAKMRVRLPMLILLLGVVFLLAASIGIAYG) is a signal peptide. Basic and acidic residues-rich tracts occupy residues 32–82 (KDFT…RSQS) and 130–141 (SRREEREEREQE). Disordered stretches follow at residues 32-194 (KDFT…NRFQ) and 384-407 (LRKHAQSSSGEGKPSESGPFNLRS). Positions 142–151 (QGSSSGSQRG) are enriched in low complexity. The segment covering 152 to 181 (SGDERRQHRERRVHREEREQEQDSRSDSRR) has biased composition (basic and acidic residues). Residues 186-344 (YHFSSNRFQT…TFNTRYEEIE (159 aa)) enclose the Cupin type-1 1 domain. Over residues 390-402 (SSSGEGKPSESGP) the composition is skewed to low complexity. A Cupin type-1 2 domain is found at 403–569 (FNLRSNKPIY…TFPGSIEDVE (167 aa)). A glycan (N-linked (GlcNAc...) asparagine) is linked at asparagine 434. Residues 476 to 495 (DQQRQQDEQEEEYEQGEEEV) are disordered. The segment covering 483–492 (EQEEEYEQGE) has biased composition (acidic residues). An N-linked (GlcNAc...) asparagine glycan is attached at asparagine 519. A compositionally biased stretch (low complexity) spans 580 to 589 (FANAQPQQQQ). Residues 580–600 (FANAQPQQQQQREKEGRRGRR) are disordered.

The protein belongs to the 7S seed storage protein family. As to quaternary structure, component of globulins complexes which accumulate in seeds.

In terms of biological role, seed storage protein. Accumulates during seed development and is hydrolyzed after germination to provide a carbon and nitrogen source for the developing seedling. This chain is Conglutin beta 1, found in Lupinus angustifolius (Narrow-leaved blue lupine).